The following is a 156-amino-acid chain: ATP synthase subunit b (156 aa).

Residues 7 to 27 traverse the membrane as a helical segment; it reads LFVQAIVFLILVLFTMKFVWP.

It belongs to the ATPase B chain family. F-type ATPases have 2 components, F(1) - the catalytic core - and F(0) - the membrane proton channel. F(1) has five subunits: alpha(3), beta(3), gamma(1), delta(1), epsilon(1). F(0) has three main subunits: a(1), b(2) and c(10-14). The alpha and beta chains form an alternating ring which encloses part of the gamma chain. F(1) is attached to F(0) by a central stalk formed by the gamma and epsilon chains, while a peripheral stalk is formed by the delta and b chains.

It is found in the cell inner membrane. Functionally, f(1)F(0) ATP synthase produces ATP from ADP in the presence of a proton or sodium gradient. F-type ATPases consist of two structural domains, F(1) containing the extramembraneous catalytic core and F(0) containing the membrane proton channel, linked together by a central stalk and a peripheral stalk. During catalysis, ATP synthesis in the catalytic domain of F(1) is coupled via a rotary mechanism of the central stalk subunits to proton translocation. Its function is as follows. Component of the F(0) channel, it forms part of the peripheral stalk, linking F(1) to F(0). This chain is ATP synthase subunit b, found in Paracidovorax citrulli (strain AAC00-1) (Acidovorax citrulli).